We begin with the raw amino-acid sequence, 88 residues long: uncharacterized protein (88 aa).

This sequence to E.coli YihD.

This is an uncharacterized protein from Haemophilus influenzae (strain ATCC 51907 / DSM 11121 / KW20 / Rd).